The primary structure comprises 337 residues: MSVEVFYDDDADLGLIQGRTVAVIGYGSQGHAHALSLRDSGVAVVIGLPAGSKSRPKAEEQGLRVLTPAEAAAEADIIMILAPDTAQRALYTDSIAPHLTAGKALLFGHGFNIRYGLITPPVDVDVAMIAPKGPGHLVRRQYVDGKGVPCLVAVEQDASGSALGLALAYAKAIGGTRAGVIKTTFTEETETDLFGEQAVLCGGAAALVQTGFEVLTEAGYAPEVAYFECLHELKLIVDLMYEGGIARMRYSISDTAEYGDLSRGPRVIDSQVKERMRAVLGEIQSGEFAREWVAEDEAGRPNFAKWRAEGAAHPIEETGGRLRAMMSWVDRPITETA.

A KARI N-terminal Rossmann domain is found at 3 to 183; sequence VEVFYDDDAD…GGTRAGVIKT (181 aa). NADP(+)-binding positions include 26–29, serine 52, serine 54, and 84–87; these read YGSQ and DTAQ. The active site involves histidine 109. Residue glycine 135 coordinates NADP(+). In terms of domain architecture, KARI C-terminal knotted spans 184-329; that stretch reads TFTEETETDL…GRLRAMMSWV (146 aa). The Mg(2+) site is built by aspartate 192, glutamate 196, glutamate 228, and glutamate 232. A substrate-binding site is contributed by serine 253.

This sequence belongs to the ketol-acid reductoisomerase family. It depends on Mg(2+) as a cofactor.

The enzyme catalyses (2R)-2,3-dihydroxy-3-methylbutanoate + NADP(+) = (2S)-2-acetolactate + NADPH + H(+). It catalyses the reaction (2R,3R)-2,3-dihydroxy-3-methylpentanoate + NADP(+) = (S)-2-ethyl-2-hydroxy-3-oxobutanoate + NADPH + H(+). It functions in the pathway amino-acid biosynthesis; L-isoleucine biosynthesis; L-isoleucine from 2-oxobutanoate: step 2/4. Its pathway is amino-acid biosynthesis; L-valine biosynthesis; L-valine from pyruvate: step 2/4. Involved in the biosynthesis of branched-chain amino acids (BCAA). Catalyzes an alkyl-migration followed by a ketol-acid reduction of (S)-2-acetolactate (S2AL) to yield (R)-2,3-dihydroxy-isovalerate. In the isomerase reaction, S2AL is rearranged via a Mg-dependent methyl migration to produce 3-hydroxy-3-methyl-2-ketobutyrate (HMKB). In the reductase reaction, this 2-ketoacid undergoes a metal-dependent reduction by NADPH to yield (R)-2,3-dihydroxy-isovalerate. This is Ketol-acid reductoisomerase (NADP(+)) from Salinispora tropica (strain ATCC BAA-916 / DSM 44818 / JCM 13857 / NBRC 105044 / CNB-440).